Here is a 175-residue protein sequence, read N- to C-terminus: Adenine phosphoribosyltransferase (175 aa).

The protein belongs to the purine/pyrimidine phosphoribosyltransferase family. Homodimer.

It localises to the cytoplasm. The catalysed reaction is AMP + diphosphate = 5-phospho-alpha-D-ribose 1-diphosphate + adenine. It participates in purine metabolism; AMP biosynthesis via salvage pathway; AMP from adenine: step 1/1. Its function is as follows. Catalyzes a salvage reaction resulting in the formation of AMP, that is energically less costly than de novo synthesis. This chain is Adenine phosphoribosyltransferase, found in Lactobacillus johnsonii (strain CNCM I-12250 / La1 / NCC 533).